Consider the following 604-residue polypeptide: Kelch-like protein 15 (604 aa).

The BTB domain maps to 31–98 (LDVTLLIEEH…MYYGSLELSM (68 aa)). The 105-residue stretch at 133–237 (CAEVMRLLED…TPANIFEKVK (105 aa)) folds into the BACK domain. 5 Kelch repeats span residues 328–379 (FAFL…VIGK), 381–426 (IYAV…VLNG), 428–473 (LYIT…NKSK), 489–542 (KLYV…VLDK), and 544–592 (IMVL…SLHF).

Its subcellular location is the nucleus. The protein operates within protein modification; protein ubiquitination. Its function is as follows. Substrate-specific adapter for an E3 ubiquitin-protein ligase complex. The protein is Kelch-like protein 15 (klhl15) of Danio rerio (Zebrafish).